The following is a 247-amino-acid chain: Phosphate import ATP-binding protein PstB (247 aa).

An ABC transporter domain is found at 2 to 242 (CRDVNVYYGE…PRHPLTEDYI (241 aa)). An ATP-binding site is contributed by 32-39 (GPSGCGKS).

It belongs to the ABC transporter superfamily. Phosphate importer (TC 3.A.1.7) family. The complex is composed of two ATP-binding proteins (PstB), two transmembrane proteins (PstC and PstA) and a solute-binding protein (PstS).

The protein resides in the cell inner membrane. It catalyses the reaction phosphate(out) + ATP + H2O = ADP + 2 phosphate(in) + H(+). Part of the ABC transporter complex PstSACB involved in phosphate import. Responsible for energy coupling to the transport system. In Methylococcus capsulatus (strain ATCC 33009 / NCIMB 11132 / Bath), this protein is Phosphate import ATP-binding protein PstB.